We begin with the raw amino-acid sequence, 359 residues long: 3-dehydroquinate synthase (359 aa).

NAD(+) contacts are provided by residues 70–75 (DAEGGK), 104–108 (GAATD), 128–129 (TT), Lys-141, and Lys-150. Residues Glu-183, His-246, and His-262 each coordinate Zn(2+).

This sequence belongs to the sugar phosphate cyclases superfamily. Dehydroquinate synthase family. Requires Co(2+) as cofactor. The cofactor is Zn(2+). NAD(+) is required as a cofactor.

It localises to the cytoplasm. The catalysed reaction is 7-phospho-2-dehydro-3-deoxy-D-arabino-heptonate = 3-dehydroquinate + phosphate. The protein operates within metabolic intermediate biosynthesis; chorismate biosynthesis; chorismate from D-erythrose 4-phosphate and phosphoenolpyruvate: step 2/7. Functionally, catalyzes the conversion of 3-deoxy-D-arabino-heptulosonate 7-phosphate (DAHP) to dehydroquinate (DHQ). This is 3-dehydroquinate synthase from Mycolicibacterium vanbaalenii (strain DSM 7251 / JCM 13017 / BCRC 16820 / KCTC 9966 / NRRL B-24157 / PYR-1) (Mycobacterium vanbaalenii).